The chain runs to 499 residues: Tektin-like protein 1 (499 aa).

Ser14 carries the phosphoserine modification. Residues 201-225 (WEKKELKSMKRKMEKDMEISEDLLK) are a coiled coil. The disordered stretch occupies residues 265 to 286 (VDITRPPTPRTQGLKTPPPDPI). Residues 308–328 (KDILTEMAKNEVDIQNQQQEI) adopt a coiled-coil conformation. Tyr372 carries the phosphotyrosine modification.

Microtubule inner protein component of sperm flagellar doublet microtubules.

The protein localises to the cytoplasm. The protein resides in the cytoskeleton. Its subcellular location is the flagellum axoneme. Its function is as follows. Microtubule inner protein (MIP) part of the dynein-decorated doublet microtubules (DMTs) in sperm flagellar axoneme, which is required for motile flagellum beating. Forms an extensive interaction network cross-linking the lumen of axonemal doublet microtubules. In Mus musculus (Mouse), this protein is Tektin-like protein 1.